We begin with the raw amino-acid sequence, 319 residues long: Ribonuclease Z (319 aa).

Zn(2+)-binding residues include His62, His64, Asp66, His67, His145, Asp215, and His273. Asp66 acts as the Proton acceptor in catalysis.

It belongs to the RNase Z family. In terms of assembly, homodimer. The cofactor is Zn(2+).

It carries out the reaction Endonucleolytic cleavage of RNA, removing extra 3' nucleotides from tRNA precursor, generating 3' termini of tRNAs. A 3'-hydroxy group is left at the tRNA terminus and a 5'-phosphoryl group is left at the trailer molecule.. Zinc phosphodiesterase, which displays some tRNA 3'-processing endonuclease activity. Probably involved in tRNA maturation, by removing a 3'-trailer from precursor tRNA. This is Ribonuclease Z from Borreliella burgdorferi (strain ATCC 35210 / DSM 4680 / CIP 102532 / B31) (Borrelia burgdorferi).